Here is a 59-residue protein sequence, read N- to C-terminus: Mu-conotoxin SrVA (59 aa).

The first 22 residues, 1-22, serve as a signal peptide directing secretion; that stretch reads MRCLPVFVILLLLIASAPSVDA. Residues 23 to 44 constitute a propeptide that is removed on maturation; the sequence is QLKTKDDVPLASFHDNAKGTQH. Intrachain disulfides connect Cys51/Cys58 and Cys52/Cys59.

This sequence belongs to the conotoxin T superfamily. Expressed by the venom duct.

It localises to the secreted. Functionally, mu-conotoxins block voltage-gated sodium channels. This peptide inhibits the cardiac sodium channel hNav1.5/SCN5A (33% inhibition at 200 nM, 50% at 400 nM, and 55% at 600 nM). Does not interfere with the voltage-dependence of activation, but affects the voltage-dependence of inactivation of hNav1.5. In vivo, intracranial injection into 9-day-old mice causes transient symptoms, including extension of the body and clockwise and counter-clockwise turns, that last 3 to 4 minutes. Intracranial injection into 16-day-old mice, causes transient symptoms, including agitated breathing and occasional turning followed by scratching and grooming behavior, that last for 15-19 minutes. This Conus spurius (Alphabet cone) protein is Mu-conotoxin SrVA.